Reading from the N-terminus, the 78-residue chain is MWIFPLKPSIKKTQVYTGIVKRSRIITACSHVICVLGIIVGDEVVRLHGKCADIFMIFLVINEPFLFVFVRYFNYADS.

2 helical membrane-spanning segments follow: residues 25 to 45 and 50 to 70; these read IITA…DEVV and KCAD…FVFV.

Its subcellular location is the membrane. This is an uncharacterized protein from Saccharomyces cerevisiae (strain ATCC 204508 / S288c) (Baker's yeast).